A 104-amino-acid chain; its full sequence is L-rhamnose mutarotase (104 aa).

Tyr18 provides a ligand contact to substrate. The active-site Proton donor is His22. Residues Tyr41 and 76–77 (WW) each bind substrate.

Belongs to the rhamnose mutarotase family. In terms of assembly, homodimer.

It is found in the cytoplasm. It carries out the reaction alpha-L-rhamnose = beta-L-rhamnose. It functions in the pathway carbohydrate metabolism; L-rhamnose metabolism. Functionally, involved in the anomeric conversion of L-rhamnose. The sequence is that of L-rhamnose mutarotase from Escherichia coli O8 (strain IAI1).